A 453-amino-acid polypeptide reads, in one-letter code: Ubiquitin-associated protein 1 (453 aa).

The 47-residue stretch at 19–65 (LDDVPFKLNEKFRCPSKVGLPIGFCLSDCNAILSDLQYDFNLERRTV) folds into the UMA domain. Basic and acidic residues predominate over residues 83-93 (EAIRTDSESER). 3 disordered regions span residues 83 to 119 (EAIR…QDIV), 189 to 223 (LQSQ…AKTG), and 260 to 335 (FPKL…AGTT). Residues 189-199 (LQSQPQSSVSP) are compositionally biased toward low complexity. Over residues 285-328 (NLSNGTPPSLQRTASNNNTTLPQEQPVFAQNGTPKQSNPVTVTS) the composition is skewed to polar residues. 2 consecutive UBA domains span residues 340 to 381 (SPSE…LFTH) and 403 to 449 (GSEE…LMTR).

As to quaternary structure, component of an ESCRT-I complex (endosomal sorting complex required for transport I).

It is found in the cytoplasm. The protein localises to the cytosol. Its subcellular location is the endosome. Functionally, component of the ESCRT-I complex, a regulator of vesicular trafficking process. Binds to ubiquitinated cargo proteins and is required for the sorting of endocytic ubiquitinated cargos into multivesicular bodies (MVBs). The sequence is that of Ubiquitin-associated protein 1 from Danio rerio (Zebrafish).